Here is a 485-residue protein sequence, read N- to C-terminus: MELFDLTIHELHDRLKRKELSSVEATRAMLARIEAVDPKVNAYITVTPEEALAAAEAADRRIAAGDMAPLTGIPVALKDIFVTKGIRTTCASKILDNFVPPYDGTAVAKLKEAGAVIVGKLNQDEFAMGSSGESSAFGPTRNPWNLECIPGGSSSGSAAAIAARTATATLGTDTGGSIRQPASHCGCVGLRPTYGRVSRYGVIAYASSLDQVGPVTRDVTDCALMLQAVAGHDPMDSTSVEVPVPDYAKGLTGDVKGLKLGLPKEYYIEGLDPDVKKALDEAIETYRGLGAEFVDISLPHTDYAVATYYLIATAEASSNLARYEGVRFGHRTEGAANLIDMFRKTRSEGFGDEVKRRIMIGTYALSSGYYDAYYLKAQKVRTLIMQDFLKAFEAVDAILTPVAPTPAFKIGEKTSDPLRMYLSDIFTIPVNLAGTCAVSVPAGMSGAGLPIGLQLIGRPFGEETILRAAHAFEQATAWHTQKAGI.

Catalysis depends on charge relay system residues Lys78 and Ser153. Catalysis depends on Ser177, which acts as the Acyl-ester intermediate.

Belongs to the amidase family. GatA subfamily. Heterotrimer of A, B and C subunits.

The catalysed reaction is L-glutamyl-tRNA(Gln) + L-glutamine + ATP + H2O = L-glutaminyl-tRNA(Gln) + L-glutamate + ADP + phosphate + H(+). Functionally, allows the formation of correctly charged Gln-tRNA(Gln) through the transamidation of misacylated Glu-tRNA(Gln) in organisms which lack glutaminyl-tRNA synthetase. The reaction takes place in the presence of glutamine and ATP through an activated gamma-phospho-Glu-tRNA(Gln). This Geobacter metallireducens (strain ATCC 53774 / DSM 7210 / GS-15) protein is Glutamyl-tRNA(Gln) amidotransferase subunit A.